We begin with the raw amino-acid sequence, 273 residues long: Rhamnulose-1-phosphate aldolase (273 aa).

The active site involves glutamate 117. Histidine 140, histidine 142, and histidine 211 together coordinate Zn(2+).

Belongs to the aldolase class II family. RhaD subfamily. Zn(2+) is required as a cofactor.

Its subcellular location is the cytoplasm. The catalysed reaction is L-rhamnulose 1-phosphate = (S)-lactaldehyde + dihydroxyacetone phosphate. It functions in the pathway carbohydrate degradation; L-rhamnose degradation; glycerone phosphate from L-rhamnose: step 3/3. Functionally, catalyzes the reversible cleavage of L-rhamnulose-1-phosphate to dihydroxyacetone phosphate (DHAP) and L-lactaldehyde. The chain is Rhamnulose-1-phosphate aldolase from Listeria monocytogenes serovar 1/2a (strain ATCC BAA-679 / EGD-e).